A 514-amino-acid polypeptide reads, in one-letter code: HTH-type transcriptional regulatory protein TyrR (514 aa).

The region spanning 2–72 (RLEVFCEDRL…GVTDVRTVPW (71 aa)) is the ACT domain. Residues 78–120 (EHLALSALLEALPEPVLSLDMKSKIEMANPASCQLFAHTQDRM) form the PAS domain. In terms of domain architecture, Sigma-54 factor interaction spans 206-428 (IIAVSAKMKH…VKNAIYRALT (223 aa)). Residues 234-241 (GNTGTGKD) and 290-299 (ANGGSVLLDE) contribute to the ATP site. The H-T-H motif DNA-binding region spans 482 to 502 (STRKLAKRLGVSHTAIANKLR).

As to quaternary structure, homodimer. In presence of tyrosine (or high concentrations of phenylalanine or tryptophan) and ATP, it self-associates to form an hexamer.

It localises to the cytoplasm. Functionally, dual transcriptional regulator of the TyrR regulon, which includes a number of genes coding for proteins involved in the biosynthesis or transport of the three aromatic amino acids, phenylalanine, tyrosine and tryptophan. These three aromatic amino acids act as effectors which bind to the TyrR protein to form an active regulatory protein. Acts by binding specifically to TyrR boxes in the promoter region of the target genes. In Citrobacter braakii, this protein is HTH-type transcriptional regulatory protein TyrR.